A 307-amino-acid chain; its full sequence is UDP-N-acetylenolpyruvoylglucosamine reductase (307 aa).

Residues 27–193 form the FAD-binding PCMH-type domain; it reads RVGGPADVVF…LDAVFEGLAD (167 aa). Arg-172 is an active-site residue. Ser-222 functions as the Proton donor in the catalytic mechanism. The active site involves Glu-299.

It belongs to the MurB family. FAD is required as a cofactor.

The protein localises to the cytoplasm. The enzyme catalyses UDP-N-acetyl-alpha-D-muramate + NADP(+) = UDP-N-acetyl-3-O-(1-carboxyvinyl)-alpha-D-glucosamine + NADPH + H(+). The protein operates within cell wall biogenesis; peptidoglycan biosynthesis. Its function is as follows. Cell wall formation. The protein is UDP-N-acetylenolpyruvoylglucosamine reductase of Caulobacter sp. (strain K31).